The sequence spans 116 residues: NADPH-dependent 7-cyano-7-deazaguanine reductase (116 aa).

Cysteine 31 serves as the catalytic Thioimide intermediate. The active-site Proton donor is the aspartate 38. Substrate-binding positions include 53 to 55 (VEL) and 72 to 73 (YE).

The protein belongs to the GTP cyclohydrolase I family. QueF type 1 subfamily.

Its subcellular location is the cytoplasm. The enzyme catalyses 7-aminomethyl-7-carbaguanine + 2 NADP(+) = 7-cyano-7-deazaguanine + 2 NADPH + 3 H(+). It functions in the pathway tRNA modification; tRNA-queuosine biosynthesis. Its function is as follows. Catalyzes the NADPH-dependent reduction of 7-cyano-7-deazaguanine (preQ0) to 7-aminomethyl-7-deazaguanine (preQ1). This is NADPH-dependent 7-cyano-7-deazaguanine reductase from Chlorobium phaeovibrioides (strain DSM 265 / 1930) (Prosthecochloris vibrioformis (strain DSM 265)).